A 297-amino-acid polypeptide reads, in one-letter code: Malonyl-[acyl-carrier protein] O-methyltransferase (297 aa).

This sequence belongs to the methyltransferase superfamily.

It catalyses the reaction malonyl-[ACP] + S-adenosyl-L-methionine = malonyl-[ACP] methyl ester + S-adenosyl-L-homocysteine. It functions in the pathway cofactor biosynthesis; biotin biosynthesis. Its function is as follows. Converts the free carboxyl group of a malonyl-thioester to its methyl ester by transfer of a methyl group from S-adenosyl-L-methionine (SAM). It allows to synthesize pimeloyl-ACP via the fatty acid synthetic pathway. The chain is Malonyl-[acyl-carrier protein] O-methyltransferase from Laribacter hongkongensis (strain HLHK9).